Here is a 356-residue protein sequence, read N- to C-terminus: Phospho-N-acetylmuramoyl-pentapeptide-transferase (356 aa).

The next 10 membrane-spanning stretches (helical) occupy residues 25–45 (TVAA…SIIS), 70–90 (GTPT…ALLW), 93–113 (LFNI…AIGF), 138–158 (FLVA…GLAL), 164–184 (YFIN…VGLG), 195–215 (GLAI…AYLS), 232–252 (VGEL…FLWF), 258–278 (AIFM…IVSV), 284–304 (IVLI…IIQV), and 333–353 (QIVV…LSTL).

Belongs to the glycosyltransferase 4 family. MraY subfamily. Mg(2+) serves as cofactor.

The protein resides in the cell inner membrane. The enzyme catalyses UDP-N-acetyl-alpha-D-muramoyl-L-alanyl-gamma-D-glutamyl-meso-2,6-diaminopimeloyl-D-alanyl-D-alanine + di-trans,octa-cis-undecaprenyl phosphate = di-trans,octa-cis-undecaprenyl diphospho-N-acetyl-alpha-D-muramoyl-L-alanyl-D-glutamyl-meso-2,6-diaminopimeloyl-D-alanyl-D-alanine + UMP. Its pathway is cell wall biogenesis; peptidoglycan biosynthesis. In terms of biological role, catalyzes the initial step of the lipid cycle reactions in the biosynthesis of the cell wall peptidoglycan: transfers peptidoglycan precursor phospho-MurNAc-pentapeptide from UDP-MurNAc-pentapeptide onto the lipid carrier undecaprenyl phosphate, yielding undecaprenyl-pyrophosphoryl-MurNAc-pentapeptide, known as lipid I. In Bartonella bacilliformis (strain ATCC 35685 / KC583 / Herrer 020/F12,63), this protein is Phospho-N-acetylmuramoyl-pentapeptide-transferase.